The primary structure comprises 113 residues: Heavy metal-associated isoprenylated plant protein 15 (113 aa).

The HMA domain occupies 1–65; it reads MIVWMGVYDQ…KWGKAKLTLY (65 aa). Residues 69–89 are a coiled coil; that stretch reads DALKEAKIAEAKQKREEIERE. Position 110 is a cysteine methyl ester (cysteine 110). A lipid anchor (S-farnesyl cysteine) is attached at cysteine 110. Positions 111 to 113 are cleaved as a propeptide — removed in mature form; it reads VIC.

It belongs to the HIPP family. In terms of tissue distribution, expressed in embryo sacs.

In terms of biological role, probable heavy-metal-binding protein. The polypeptide is Heavy metal-associated isoprenylated plant protein 15 (Arabidopsis thaliana (Mouse-ear cress)).